The following is a 700-amino-acid chain: Eukaryotic peptide chain release factor GTP-binding subunit (700 aa).

The interval 10 to 136 (GQGQGYNQYN…YAAPAQSSSQ (127 aa)) is several sort of repeats. The span at 114 to 123 (QGAQGYNAQQ) shows a compositional bias: low complexity. Positions 114 to 250 (QGAQGYNAQQ…TSTGGANSVD (137 aa)) are disordered. Over residues 131–151 (AQSSSQGMTLKDFQNQQGSTN) the composition is skewed to polar residues. Positions 137 to 267 (GMTLKDFQNQ…DEVDEEVVKD (131 aa)) are charged. Composition is skewed to basic and acidic residues over residues 179 to 194 (KTEKTDESKEATKTTD) and 204 to 221 (PKIDDLKISEAEKPKTKE). Residues 222 to 246 (NTPSADDTSSEKTTSAKADTSTGGA) are compositionally biased toward polar residues. The 227-residue stretch at 272–498 (KDHVSIIFMG…YLDNMKTTDR (227 aa)) folds into the tr-type G domain. The segment at 281 to 288 (GHVDAGKS) is G1. 281 to 288 (GHVDAGKS) is a GTP binding site. Residues 337–341 (GKTIE) are G2. Phosphothreonine is present on threonine 355. The G3 stretch occupies residues 358-361 (DAPG). GTP-binding positions include 358-362 (DAPGH) and 420-423 (NKMD). The tract at residues 420–423 (NKMD) is G4. The G5 stretch occupies residues 462–464 (SGY).

This sequence belongs to the TRAFAC class translation factor GTPase superfamily. Classic translation factor GTPase family. ERF3 subfamily.

Its subcellular location is the cytoplasm. Its function is as follows. Involved in translation termination. Stimulates the activity of ERF1. Binds guanine nucleotides. The protein is Eukaryotic peptide chain release factor GTP-binding subunit (SUP35) of Kluyveromyces lactis (strain ATCC 8585 / CBS 2359 / DSM 70799 / NBRC 1267 / NRRL Y-1140 / WM37) (Yeast).